Reading from the N-terminus, the 339-residue chain is Phosphate acyltransferase (339 aa).

It belongs to the PlsX family. As to quaternary structure, homodimer. Probably interacts with PlsY.

The protein resides in the cytoplasm. It catalyses the reaction a fatty acyl-[ACP] + phosphate = an acyl phosphate + holo-[ACP]. The protein operates within lipid metabolism; phospholipid metabolism. Catalyzes the reversible formation of acyl-phosphate (acyl-PO(4)) from acyl-[acyl-carrier-protein] (acyl-ACP). This enzyme utilizes acyl-ACP as fatty acyl donor, but not acyl-CoA. This is Phosphate acyltransferase from Clostridium perfringens (strain SM101 / Type A).